Here is a 743-residue protein sequence, read N- to C-terminus: MSENHETVVSELNEESGGGCPVAHERAPHPTQGGGNRGWWPNRLNLKILAKNPAVANPLGEEFDYAAAFRTLDLPAVKRDIAQVLTTSQDWWPADYGHYGPFMIRMAWHSAGTYRISDGRGGGGAGQQRFAPLNSWPDNGNLDKARRLLWPVKKKYGQALSWADLMILAGNVALESMGFTTFGFAGGREDVWEPDEDVYWGPETTWLGDERYTGDRELENPLGAVQMGLIYVNPEGPNGTPDPLAAARDIRETFRRMAMDDEETVALIAGGHTFGKTHGAGDPDNVGPEPEGAPLETQGLGWKNAFGTGKGADAITSGLEGAWTPTPVSWDNSFFETLFGYEWALTKSPAGAYQWKPKGGAGAGTVPDAHDAAKSHAPTMLTTDLALRFDPVYEPISRRFLEHPDELADAFARAWFKLTHRDMGPVARYLGPEVPAETLLWQDPVPAVDHELVDAADVAALKVRVLASGLSVSELVATAWASASTFRGGDKRGGANGARIRLEPQRGWEVNEPDRLAAVLGTLTGIQEEFHAARTDGRRVSLADLIVLAGGAAVEQAAREAGFDVEVPFTPGRTDASQELTDVESFAALEPAADGFRNYLGKGQRLPAEYLLLDRANLLTLSAPELTVLVGGLRVLGANFRQSSLGVLTATPGVLTNDFFANLLDLGTTWRPSGEDDNVFEGRDAATGELTWTGSRVDLVFGSNSELRAFAEVYASDDAREKFVRDFVAAWAKVMNLDRYDLA.

The interval 1 to 21 (MSENHETVVSELNEESGGGCP) is disordered. Positions 108–231 (WHSAGTYRIS…LGAVQMGLIY (124 aa)) form a cross-link, tryptophyl-tyrosyl-methioninium (Trp-Tyr) (with M-257). The active-site Proton acceptor is His-109. Residues 231–257 (YVNPEGPNGTPDPLAAARDIRETFRRM) constitute a cross-link (tryptophyl-tyrosyl-methioninium (Tyr-Met) (with W-108)). His-272 lines the heme b pocket. The segment at 275-296 (GKTHGAGDPDNVGPEPEGAPLE) is disordered.

It belongs to the peroxidase family. Peroxidase/catalase subfamily. As to quaternary structure, homodimer or homotetramer. Heme b is required as a cofactor. In terms of processing, formation of the three residue Trp-Tyr-Met cross-link is important for the catalase, but not the peroxidase activity of the enzyme.

The catalysed reaction is H2O2 + AH2 = A + 2 H2O. It catalyses the reaction 2 H2O2 = O2 + 2 H2O. In terms of biological role, bifunctional enzyme with both catalase and broad-spectrum peroxidase activity. The sequence is that of Catalase-peroxidase from Parafrankia sp. (strain EAN1pec).